Reading from the N-terminus, the 412-residue chain is Divalent metal cation transporter MntH (412 aa).

11 helical membrane passes run 19–39 (LALMGPAFIAAIGYIDPGNFA), 46–66 (ASFGYQLLWVVVWANLMAMLI), 94–114 (VWFYWVQAEIIAMATDLAEFI), 122–142 (LILGVSLLQGAVLTGIATFLI), 156–176 (VIGGLLLFVAAAYIVELFFSQ), 196–216 (AVFLAAGVLGATIMPHVIYLH), 241–261 (IAMTIAGFVNLAMMATAAAAF), 290–310 (IFGLSLVAAGLSSTVVGTLAG), 322–342 (IPLWVRRAVTMAPSFIVILMG), 348–368 (ILVMSQVLLSFGIALALVPLL), and 392–412 (AIVVLVVALNIWLLVGTALGL).

Belongs to the NRAMP family.

It is found in the cell inner membrane. Its function is as follows. H(+)-stimulated, divalent metal cation uptake system. The polypeptide is Divalent metal cation transporter MntH (Cronobacter sakazakii (strain ATCC BAA-894) (Enterobacter sakazakii)).